The following is a 201-amino-acid chain: 3-isopropylmalate dehydratase small subunit (201 aa).

The protein belongs to the LeuD family. LeuD type 1 subfamily. In terms of assembly, heterodimer of LeuC and LeuD.

The catalysed reaction is (2R,3S)-3-isopropylmalate = (2S)-2-isopropylmalate. It participates in amino-acid biosynthesis; L-leucine biosynthesis; L-leucine from 3-methyl-2-oxobutanoate: step 2/4. Catalyzes the isomerization between 2-isopropylmalate and 3-isopropylmalate, via the formation of 2-isopropylmaleate. In Cytophaga hutchinsonii (strain ATCC 33406 / DSM 1761 / CIP 103989 / NBRC 15051 / NCIMB 9469 / D465), this protein is 3-isopropylmalate dehydratase small subunit.